We begin with the raw amino-acid sequence, 429 residues long: Enolase (429 aa).

Position 167 (glutamine 167) interacts with (2R)-2-phosphoglycerate. Glutamate 209 serves as the catalytic Proton donor. Mg(2+) is bound by residues aspartate 246, glutamate 289, and aspartate 316. (2R)-2-phosphoglycerate contacts are provided by lysine 341, arginine 370, serine 371, and lysine 392. Lysine 341 serves as the catalytic Proton acceptor.

The protein belongs to the enolase family. Component of the RNA degradosome, a multiprotein complex involved in RNA processing and mRNA degradation. Mg(2+) serves as cofactor.

The protein localises to the cytoplasm. Its subcellular location is the secreted. The protein resides in the cell surface. The catalysed reaction is (2R)-2-phosphoglycerate = phosphoenolpyruvate + H2O. It participates in carbohydrate degradation; glycolysis; pyruvate from D-glyceraldehyde 3-phosphate: step 4/5. Catalyzes the reversible conversion of 2-phosphoglycerate (2-PG) into phosphoenolpyruvate (PEP). It is essential for the degradation of carbohydrates via glycolysis. This is Enolase from Pseudomonas fluorescens (strain ATCC BAA-477 / NRRL B-23932 / Pf-5).